A 214-amino-acid polypeptide reads, in one-letter code: Alkaline phosphatase-like protein (214 aa).

Helical transmembrane passes span 48-68 (LGIIGMIIAATIGSVLGALIL), 141-161 (FLILTTLGTLIWNIVLVCLGA), and 177-197 (YSSVVVVILGIIFILAILIFV).

It belongs to the DedA family.

It is found in the cell membrane. The protein is Alkaline phosphatase-like protein (apl) of Lactococcus lactis subsp. lactis (strain IL1403) (Streptococcus lactis).